Reading from the N-terminus, the 274-residue chain is Large ribosomal subunit protein uL2cz/uL2cy (274 aa).

Disordered regions lie at residues 1–21 and 225–274; these read MAIH…VDSQ and PVDH…RRSK.

Belongs to the universal ribosomal protein uL2 family. In terms of assembly, part of the 50S ribosomal subunit.

It is found in the plastid. The protein localises to the chloroplast. The polypeptide is Large ribosomal subunit protein uL2cz/uL2cy (rpl2-A) (Arabidopsis thaliana (Mouse-ear cress)).